The sequence spans 125 residues: uncharacterized protein (125 aa).

It localises to the plastid. This is an uncharacterized protein from Euglena longa (Euglenophycean alga).